The chain runs to 248 residues: Ubiquinone biosynthesis O-methyltransferase (248 aa).

4 residues coordinate S-adenosyl-L-methionine: Arg41, Gly72, Asp93, and Met136.

This sequence belongs to the methyltransferase superfamily. UbiG/COQ3 family.

It carries out the reaction a 3-demethylubiquinol + S-adenosyl-L-methionine = a ubiquinol + S-adenosyl-L-homocysteine + H(+). The enzyme catalyses a 3-(all-trans-polyprenyl)benzene-1,2-diol + S-adenosyl-L-methionine = a 2-methoxy-6-(all-trans-polyprenyl)phenol + S-adenosyl-L-homocysteine + H(+). It functions in the pathway cofactor biosynthesis; ubiquinone biosynthesis. Functionally, O-methyltransferase that catalyzes the 2 O-methylation steps in the ubiquinone biosynthetic pathway. This Rhizobium etli (strain ATCC 51251 / DSM 11541 / JCM 21823 / NBRC 15573 / CFN 42) protein is Ubiquinone biosynthesis O-methyltransferase.